The following is a 429-amino-acid chain: Enolase (429 aa).

Glutamine 162 serves as a coordination point for (2R)-2-phosphoglycerate. The active-site Proton donor is the glutamate 204. Positions 241, 288, and 315 each coordinate Mg(2+). Positions 340, 369, 370, and 391 each coordinate (2R)-2-phosphoglycerate. Residue lysine 340 is the Proton acceptor of the active site.

It belongs to the enolase family. The cofactor is Mg(2+).

Its subcellular location is the cytoplasm. It localises to the secreted. The protein localises to the cell surface. It carries out the reaction (2R)-2-phosphoglycerate = phosphoenolpyruvate + H2O. Its pathway is carbohydrate degradation; glycolysis; pyruvate from D-glyceraldehyde 3-phosphate: step 4/5. In terms of biological role, catalyzes the reversible conversion of 2-phosphoglycerate (2-PG) into phosphoenolpyruvate (PEP). It is essential for the degradation of carbohydrates via glycolysis. The sequence is that of Enolase from Christiangramia forsetii (strain DSM 17595 / CGMCC 1.15422 / KT0803) (Gramella forsetii).